The chain runs to 310 residues: HPr kinase/phosphorylase (310 aa).

Active-site residues include His138 and Lys159. An ATP-binding site is contributed by Gly153–Ser160. Ser160 lines the Mg(2+) pocket. Catalysis depends on Asp177, which acts as the Proton acceptor; for phosphorylation activity. Proton donor; for dephosphorylation activity. The interval Leu201–Asp210 is important for the catalytic mechanism of both phosphorylation and dephosphorylation. Glu202 is a binding site for Mg(2+). Arg243 is a catalytic residue. The segment at Pro264–Arg269 is important for the catalytic mechanism of dephosphorylation.

Belongs to the HPrK/P family. As to quaternary structure, homohexamer. It depends on Mg(2+) as a cofactor.

It carries out the reaction [HPr protein]-L-serine + ATP = [HPr protein]-O-phospho-L-serine + ADP + H(+). The catalysed reaction is [HPr protein]-O-phospho-L-serine + phosphate + H(+) = [HPr protein]-L-serine + diphosphate. In terms of biological role, catalyzes the ATP- as well as the pyrophosphate-dependent phosphorylation of a specific serine residue in HPr, a phosphocarrier protein of the phosphoenolpyruvate-dependent sugar phosphotransferase system (PTS). HprK/P also catalyzes the pyrophosphate-producing, inorganic phosphate-dependent dephosphorylation (phosphorolysis) of seryl-phosphorylated HPr (P-Ser-HPr). The two antagonistic activities of HprK/P are regulated by several intracellular metabolites, which change their concentration in response to the absence or presence of rapidly metabolisable carbon sources (glucose, fructose, etc.) in the growth medium. Therefore, by controlling the phosphorylation state of HPr, HPrK/P is a sensor enzyme that plays a major role in the regulation of carbon metabolism and sugar transport: it mediates carbon catabolite repression (CCR), and regulates PTS-catalyzed carbohydrate uptake and inducer exclusion. The chain is HPr kinase/phosphorylase from Streptococcus equi subsp. equi (strain 4047).